A 160-amino-acid polypeptide reads, in one-letter code: Single-stranded DNA-binding protein 3 (160 aa).

In terms of domain architecture, SSB spans 2–104 (MNRVVLVGRL…IVAESVQFLE (103 aa)). Residues 106-133 (KQNGAGGSTSNNNQSETNYSNDNKTSSY) show a composition bias toward polar residues. The tract at residues 106–160 (KQNGAGGSTSNNNQSETNYSNDNKTSSYRADRSQNGDSFANEGAPVDINPDDLPF) is disordered.

As to quaternary structure, homotetramer.

In Listeria innocua serovar 6a (strain ATCC BAA-680 / CLIP 11262), this protein is Single-stranded DNA-binding protein 3 (ssb3).